Reading from the N-terminus, the 410-residue chain is 3-phenylpropionate/cinnamic acid dioxygenase ferredoxin--NAD(+) reductase component (410 aa).

5-36 (TIIIVGGGQAAAMAAASLRQQGFTGELHLFSD) serves as a coordination point for FAD. NAD(+) is bound at residue 146–184 (SVVIVGAGTIGLELAASATQRSAAQRSAAQRRCKVTVIE).

This sequence belongs to the bacterial ring-hydroxylating dioxygenase ferredoxin reductase family. In terms of assembly, this dioxygenase system consists of four proteins: the two subunits of the hydroxylase component (HcaE and HcaF), a ferredoxin (HcaC) and a ferredoxin reductase (HcaD). It depends on FAD as a cofactor.

The enzyme catalyses 2 reduced [2Fe-2S]-[ferredoxin] + NAD(+) + H(+) = 2 oxidized [2Fe-2S]-[ferredoxin] + NADH. The protein operates within aromatic compound metabolism; 3-phenylpropanoate degradation. In terms of biological role, part of the multicomponent 3-phenylpropionate dioxygenase, that converts 3-phenylpropionic acid (PP) and cinnamic acid (CI) into 3-phenylpropionate-dihydrodiol (PP-dihydrodiol) and cinnamic acid-dihydrodiol (CI-dihydrodiol), respectively. This Shigella flexneri serotype 5b (strain 8401) protein is 3-phenylpropionate/cinnamic acid dioxygenase ferredoxin--NAD(+) reductase component.